The sequence spans 439 residues: MQVKENKQLCLISLGCSKNLVDSEVMLGKLYNYTLTNDAKSADVILINTCGFIESAKQESIQTILNAAKDKKEGAILIASGCLSERYKDEIKELIPEVDIFTGVGDYDKIDILIAKKQNQFSEQVFLSEHYNARIITGSSVHAYVKISEGCNQKCSFCAIPSFKGKLQSRELDSILKEVENLALKGYKDMTFIAQDSSSFLYDKGQKDGLIQLIKAIDKQQALKSARILYLYPSSTTLELIGAIESSPIFQNYFDMPIQHISDSMLKKMRRNSSQAHHLKLLDAMKQVKESFIRSTIIVGHPEENEGEFEELSAFLDEFRFDRLNIFAFSAEENTHAYSLEKVPKKTINARIKALNKIALKHQNHSFKALLNKPIKALVEHKEGEYFYKARDLRWAPEVDGEILINDSELATPLQPGHYTIVPSVFKDNILLAKVLSPF.

The 113-residue stretch at 7–119 (KQLCLISLGC…IDILIAKKQN (113 aa)) folds into the MTTase N-terminal domain. Residues cysteine 16, cysteine 50, cysteine 82, cysteine 151, cysteine 155, and cysteine 158 each coordinate [4Fe-4S] cluster. The 232-residue stretch at 137–368 (TGSSVHAYVK…ALKHQNHSFK (232 aa)) folds into the Radical SAM core domain.

Belongs to the methylthiotransferase family. RimO subfamily. Requires [4Fe-4S] cluster as cofactor.

The protein localises to the cytoplasm. It catalyses the reaction L-aspartate(89)-[ribosomal protein uS12]-hydrogen + (sulfur carrier)-SH + AH2 + 2 S-adenosyl-L-methionine = 3-methylsulfanyl-L-aspartate(89)-[ribosomal protein uS12]-hydrogen + (sulfur carrier)-H + 5'-deoxyadenosine + L-methionine + A + S-adenosyl-L-homocysteine + 2 H(+). Functionally, catalyzes the methylthiolation of an aspartic acid residue of ribosomal protein uS12. The protein is Ribosomal protein uS12 methylthiotransferase RimO of Helicobacter pylori (strain HPAG1).